Reading from the N-terminus, the 208-residue chain is Small ribosomal subunit protein uS4 (208 aa).

Residues 97–160 (TRLDNVCYRM…QKQLRVQEAL (64 aa)) form the S4 RNA-binding domain.

This sequence belongs to the universal ribosomal protein uS4 family. As to quaternary structure, part of the 30S ribosomal subunit. Contacts protein S5. The interaction surface between S4 and S5 is involved in control of translational fidelity.

Functionally, one of the primary rRNA binding proteins, it binds directly to 16S rRNA where it nucleates assembly of the body of the 30S subunit. With S5 and S12 plays an important role in translational accuracy. This Xanthomonas axonopodis pv. citri (strain 306) protein is Small ribosomal subunit protein uS4.